Reading from the N-terminus, the 193-residue chain is Ion-translocating oxidoreductase complex subunit A (193 aa).

A run of 6 helical transmembrane segments spans residues 5–25 (VLLL…FLGL), 39–59 (IGMS…SYLV), 63–83 (ILIP…VIAV), 102–122 (LLGI…VALL), 134–154 (AVYG…FAAL), and 171–191 (SIAL…TGLV).

It belongs to the NqrDE/RnfAE family. In terms of assembly, the complex is composed of six subunits: RnfA, RnfB, RnfC, RnfD, RnfE and RnfG.

It localises to the cell inner membrane. In terms of biological role, part of a membrane-bound complex that couples electron transfer with translocation of ions across the membrane. The chain is Ion-translocating oxidoreductase complex subunit A from Pseudoalteromonas translucida (strain TAC 125).